Reading from the N-terminus, the 378-residue chain is UPF0754 membrane protein BCAH187_A1042 (378 aa).

The next 2 membrane-spanning stretches (helical) occupy residues Met1 to Thr21 and Tyr357 to Leu377.

Belongs to the UPF0754 family.

The protein resides in the cell membrane. This is UPF0754 membrane protein BCAH187_A1042 from Bacillus cereus (strain AH187).